Reading from the N-terminus, the 1279-residue chain is Mediator of DNA damage checkpoint protein 1 (1279 aa).

Residues 1–22 are disordered; that stretch reads MENTQVIDWDAEEEEETEISSG. The tract at residues 1 to 150 is interaction with CHEK2; sequence MENTQVIDWD…PRSLLTIEKT (150 aa). The interval 2 to 222 is interaction with the MRN complex; sequence ENTQVIDWDA…SSPFGLGSDT (221 aa). Residue Thr4 is modified to Phosphothreonine. A compositionally biased stretch (acidic residues) spans 9 to 18; that stretch reads WDAEEEEETE. One can recognise an FHA domain in the interval 54 to 105; it reads NVVGRSPDCSVALPFPSISKQHAVIEISAWNKAPILQDCGSLNGTQIVKPPR. Thr146 is subject to Phosphothreonine. Disordered stretches follow at residues 156-394, 409-634, and 714-744; these read RSQN…EEVS, LWSG…KHAK, and ETSEPIDTHEAHGSQPSLPGEPPGHQHPVPT. Ser168 and Ser176 each carry phosphoserine. Positions 179 to 192 are enriched in polar residues; it reads SVANGSRNTASPSA. Residues Ser198 and Ser220 each carry the phosphoserine modification. Thr222 is subject to Phosphothreonine. The segment covering 264 to 277 has biased composition (basic and acidic residues); sequence TKDKFKDTKMKEEA. Positions 278–292 are enriched in low complexity; that stretch reads GSAGVPVGSVVEGSP. A Phosphoserine modification is found at Ser298. Phosphothreonine is present on Thr300. A Phosphoserine modification is found at Ser314. Thr316 is subject to Phosphothreonine. Residues Ser350 and Ser354 each carry the phosphoserine modification. Thr356 is modified (phosphothreonine). Residues Ser372 and Ser380 each carry the phosphoserine modification. Acidic residues predominate over residues 381 to 393; sequence DTDEEERGEEEEV. At Thr382 the chain carries Phosphothreonine. Ser394, Ser411, Ser421, Ser434, and Ser438 each carry phosphoserine. Over residues 421 to 435 the composition is skewed to polar residues; the sequence is SQPQVLVERSQSASG. The residue at position 440 (Thr440) is a Phosphothreonine. Ser457 carries the phosphoserine modification. Thr466 carries the phosphothreonine modification. Phosphoserine is present on residues Ser488, Ser489, Ser550, Ser587, and Ser589. The span at 545-561 shows a compositional bias: polar residues; that stretch reads QEGSSSPVADIRMSQQP. Residues 620-634 show a composition bias toward basic and acidic residues; sequence GREREAHVGGTKHAK. Phosphoserine is present on residues Ser730 and Ser745. The residue at position 764 (Lys764) is an N6-acetyllysine. Residues 772-1086 are disordered; it reads QMMPDGKASG…TKPNQEAAAP (315 aa). Phosphoserine is present on residues Ser793, Ser801, and Ser824. The span at 798–817 shows a compositional bias: low complexity; it reads ASASPQSLLTSQSQKQSTPQ. Composition is skewed to polar residues over residues 862 to 889, 901 to 929, and 942 to 956; these read TCPTNQPAASRPTSRPTRGRANRSSTRT, QPSTSTEQPGIPNLTSQVTEGRAHSTSVN, and PLTSAEQSVTSNLNP. Phosphothreonine is present on Thr889. At Thr951 the chain carries Phosphothreonine. Lys991 is covalently cross-linked (Glycyl lysine isopeptide (Lys-Gly) (interchain with G-Cter in SUMO2)). Over residues 994 to 1014 the composition is skewed to low complexity; it reads STPAEPEPQSSASQSSGASEA. Phosphoserine occurs at positions 1008, 1009, 1012, and 1016. Residues 1032 to 1047 show a composition bias toward basic and acidic residues; it reads VVKEEDPGEIQVKEEP. Lys1034 participates in a covalent cross-link: Glycyl lysine isopeptide (Lys-Gly) (interchain with G-Cter in SUMO1); alternate. Residue Lys1034 forms a Glycyl lysine isopeptide (Lys-Gly) (interchain with G-Cter in SUMO2); alternate linkage. Thr1054 bears the Phosphothreonine mark. BRCT domains are found at residues 1085 to 1163 and 1184 to 1275; these read APKV…DYLV and RERR…FVLS.

In terms of assembly, homodimer. Interacts with H2AX, which requires phosphorylation of H2AX on 'Ser-139'. Interacts with the MRN complex, composed of MRE11, RAD50, and NBN. Interacts with CHEK2, which requires ATM-mediated phosphorylation of 'Thr-68' within the FHA domain of CHEK2. Interacts constitutively with the BRCA1-BARD1 complex, SMC1A and TP53BP1. Interacts with ATM and FANCD2, and these interactions are reduced upon DNA damage. Also interacts with the PRKDC complex, composed of XRCC6/KU70, XRCC5/KU80 and PRKDC/XRCC7. This interaction may be required for PRKDC autophosphorylation, which is essential for DNA double strand break (DSB) repair. When phosphorylated by ATM, interacts with RNF8 (via FHA domain). Interacts with CEP164. When phosphorylated, interacts with APTX (via FHA-like domain). Interacts (when phosphorylated) with TOPBP1; promoting TOPBP1 localization to DNA damage sites during mitosis. Interacts (when phosphorylated) with NBN; promoting NBN and MRN complex localization to DNA damage sites. Post-translationally, phosphorylated upon exposure to ionizing radiation (IR), ultraviolet radiation (UV), and hydroxyurea (HU). Phosphorylation in response to IR requires ATM, NBN, and possibly CHEK2. Also phosphorylated during the G2/M phase of the cell cycle and during activation of the mitotic spindle checkpoint. Phosphorylation at Thr-4 by ATM stabilizes and enhances homodimerization via the FHA domain. Phosphorylated at Ser-168 and Ser-198 by CK2 in response to DNA damage during mitosis, promoting interaction with TOPBP1. Phosphorylated by CK2 in response to DNA damage, promoting interaction with NBN and recruitment of the MRN complex to DNA damage sites. Sumoylation at Lys-1034 by PIAS4 following DNA damage promotes ubiquitin-mediated degradation. In terms of processing, ubiquitinated by RNF4, leading to proteasomal degradation; undergoes 'Lys-48'-linked polyubiquitination.

It localises to the nucleus. Its subcellular location is the chromosome. Its function is as follows. Histone reader protein required for checkpoint-mediated cell cycle arrest in response to DNA damage within both the S phase and G2/M phases of the cell cycle. Specifically recognizes and binds histone H2AX phosphorylated at 'Ser-139', a marker of DNA damage, serving as a scaffold for the recruitment of DNA repair and signal transduction proteins to discrete foci of DNA damage sites. Also required for downstream events subsequent to the recruitment of these proteins. These include phosphorylation and activation of the ATM, CHEK1 and CHEK2 kinases, and stabilization of TP53/p53 and apoptosis. ATM and CHEK2 may also be activated independently by a parallel pathway mediated by TP53BP1. Required for chromosomal stability during mitosis by promoting recruitment of TOPBP1 to DNA double strand breaks (DSBs): TOPBP1 forms filamentous assemblies that bridge MDC1 and tether broken chromosomes during mitosis. Required for the repair of DSBs via homologous recombination by promoting recruitment of NBN component of the MRN complex to DSBs. The sequence is that of Mediator of DNA damage checkpoint protein 1 (Mdc1) from Rattus norvegicus (Rat).